A 1500-amino-acid chain; its full sequence is Carbamoyl-phosphate synthase [ammonia], mitochondrial (1500 aa).

Residues 1-38 (MTRILTACKVVKTLKSGFGLANVTSKRQWDFSRPGIRL) constitute a mitochondrion transit peptide. Residues 39 to 218 (LSVKAQTAHI…VKVFGKGNPT (180 aa)) form an anthranilate phosphoribosyltransferase homolog region. An N6-acetyllysine; alternate mark is found at K55, K57, and K119. K55 is modified (N6-glutaryllysine; alternate). N6-succinyllysine; alternate occurs at positions 55, 57, and 119. Position 148 is a phosphoserine (S148). 2 positions are modified to N6-acetyllysine; alternate: K157 and K171. K157 bears the N6-succinyllysine; alternate mark. K171 is modified (N6-glutaryllysine; alternate). N6-glutaryllysine is present on K176. K182 bears the N6-acetyllysine mark. At S189 the chain carries Phosphoserine. At K197 the chain carries N6-acetyllysine. N6-acetyllysine; alternate occurs at positions 207, 210, 214, 219, and 228. K207, K210, K214, K219, and K228 each carry N6-glutaryllysine; alternate. Residue K207 is modified to N6-succinyllysine; alternate. K214 carries the N6-succinyllysine; alternate modification. Residues 219 to 404 (KVVAVDCGIK…FSLIKKGKGT (186 aa)) enclose the Glutamine amidotransferase type-1 domain. K237 carries the post-translational modification N6-glutaryllysine. K279 is subject to N6-acetyllysine. Residues K280, K287, K307, and K310 each carry the N6-acetyllysine; alternate modification. The residue at position 280 (K280) is an N6-glutaryllysine; alternate. N6-succinyllysine; alternate occurs at positions 287 and 307. 2 positions are modified to N6-glutaryllysine; alternate: K307 and K310. An N6-succinyllysine modification is found at K400. K402, K412, K453, and K458 each carry N6-glutaryllysine; alternate. 2 positions are modified to N6-succinyllysine; alternate: K402 and K412. An N6-acetyllysine; alternate mark is found at K412, K453, K458, K522, K527, and K532. K458, K522, and K527 each carry N6-succinyllysine; alternate. An N6-glutaryllysine; alternate mark is found at K527 and K532. S537 bears the Phosphoserine; alternate mark. A glycan (O-linked (GlcNAc) serine; alternate) is linked at S537. S540 is modified (phosphoserine). The ATP-grasp 1 domain maps to 551–743 (SDKLNEINEK…LAFIAAKIAL (193 aa)). K553 and K560 each carry N6-acetyllysine; alternate. The residue at position 553 (K553) is an N6-glutaryllysine; alternate. Residues K553 and K560 each carry the N6-succinyllysine; alternate modification. S569 bears the Phosphoserine mark. N6-acetyllysine; alternate is present on residues K575, K603, and K612. An N6-succinyllysine; alternate mark is found at K575, K603, and K612. N6-acetyllysine is present on K630. K728 carries the N6-glutaryllysine modification. N6-acetyllysine; alternate occurs at positions 751, 757, 772, 793, 811, 831, 841, and 856. An N6-succinyllysine; alternate mark is found at K751 and K757. K757, K772, K793, and K811 each carry N6-glutaryllysine; alternate. K793 is modified (N6-succinyllysine; alternate). K831 carries the post-translational modification N6-succinyllysine; alternate. 2 positions are modified to N6-glutaryllysine; alternate: K841 and K856. An N6-glutaryllysine modification is found at K869. An N6-acetyllysine; alternate mark is found at K875, K889, and K892. K875, K889, and K892 each carry N6-glutaryllysine; alternate. An N6-succinyllysine; alternate mark is found at K875, K889, and K892. Phosphoserine is present on residues S896 and S898. N6-acetyllysine; alternate occurs at positions 908, 915, and 919. 3 positions are modified to N6-glutaryllysine; alternate: K908, K915, and K919. N6-succinyllysine; alternate is present on residues K915 and K919. At K935 the chain carries N6-acetyllysine. S1036 carries the phosphoserine modification. K1074 bears the N6-acetyllysine; alternate mark. K1074 is modified (N6-glutaryllysine; alternate). An N6-succinyllysine; alternate modification is found at K1074. Phosphoserine occurs at positions 1079, 1090, and 1093. An ATP-grasp 2 domain is found at 1093–1284 (SAVLDELKVA…FIDVATKVMI (192 aa)). K1100 is modified (N6-acetyllysine; alternate). Position 1100 is an N6-succinyllysine; alternate (K1100). N6-succinyllysine is present on K1149. 2 positions are modified to N6-acetyllysine; alternate: K1168 and K1183. Residues K1168 and K1183 each carry the N6-glutaryllysine; alternate modification. Residues K1168 and K1183 each carry the N6-succinyllysine; alternate modification. The residue at position 1203 (S1203) is a Phosphoserine. K1222 is modified (N6-acetyllysine). K1224 is modified (N6-glutaryllysine). An N6-acetyllysine; alternate mark is found at K1232, K1269, and K1291. 3 positions are modified to N6-succinyllysine; alternate: K1232, K1269, and K1291. A glycan (O-linked (GlcNAc) serine) is linked at S1331. The O-linked (GlcNAc) threonine glycan is linked to T1332. The 146-residue stretch at 1355–1500 (FKIPQKGILI…YRQYSAGKAA (146 aa)) folds into the MGS-like domain. K1356 is modified (N6-acetyllysine; alternate). N6-glutaryllysine; alternate occurs at positions 1356 and 1360. 2 positions are modified to N6-succinyllysine; alternate: K1356 and K1360. N-acetyl-L-glutamate-binding residues include T1391, T1394, and W1410. Phosphoserine occurs at positions 1419 and 1431. The N-acetyl-L-glutamate site is built by N1437 and N1440. K1444 is subject to N6-acetyllysine; alternate. K1444 carries the post-translational modification N6-succinyllysine; alternate. N-acetyl-L-glutamate is bound at residue N1449. K1471, K1479, and K1486 each carry N6-acetyllysine; alternate. N6-succinyllysine; alternate is present on residues K1471, K1479, and K1486. An N6-glutaryllysine; alternate mark is found at K1479 and K1486.

Can form homooligomers (monomers as predominant form and dimers). In terms of processing, 50% of the mature protein that was isolated had Leu-39 as its N-terminal residue and 50% had Ser-40 suggesting two adjacent processing sites. However, the possibility of proteolytic removal of Leu-39 during the isolation of the enzyme cannot be excluded. Undergoes proteolytic cleavage in the C-terminal region corresponding to the loss of approximately 12 AA residues from the C-terminus. Succinylated at Lys-287 and Lys-1291. Desuccinylated at Lys-1291 by SIRT5, leading to activation. Post-translationally, glutarylated. Glutarylation levels increase during fasting. Deglutarylated by SIRT5 at Lys-55, Lys-219, Lys-412, Lys-889, Lys-892, Lys-915, Lys-1360 and Lys-1486, leading to activation. As to expression, primarily in the liver and small intestine.

The protein resides in the mitochondrion. It localises to the nucleus. It is found in the nucleolus. The protein localises to the cell membrane. It catalyses the reaction hydrogencarbonate + NH4(+) + 2 ATP = carbamoyl phosphate + 2 ADP + phosphate + 2 H(+). With respect to regulation, requires N-acetyl-L-glutamate (NAG) as an allosteric activator. N-acetyl-L-beta-phenylglutamate (Phe-NAG) can also activate CPSase I, but with an activation constant that is 2-fold higher than that for NAG. Its function is as follows. Involved in the urea cycle of ureotelic animals where the enzyme plays an important role in removing excess ammonia from the cell. This Rattus norvegicus (Rat) protein is Carbamoyl-phosphate synthase [ammonia], mitochondrial (Cps1).